The chain runs to 344 residues: Follistatin (344 aa).

The first 29 residues, 1-29 (MVCARHQPGGLCLLLLLLCQFMEDRSAQA), serve as a signal peptide directing secretion. Residues 30-103 (GNCWLRQAKN…TCENVDCGPG (74 aa)) enclose the TB domain. Disulfide bonds link C32–C55, C42–C88, C56–C91, C95–C106, C100–C116, C118–C150, C122–C143, C132–C164, C168–C179, C173–C189, C192–C225, C196–C218, C207–C239, C245–C256, C250–C267, C270–C302, C274–C295, and C284–C316. The Follistatin-like 1 domain maps to 94–117 (TCENVDCGPGKKCRMNKKNKPRCV). In terms of domain architecture, Kazal-like 1 spans 112–166 (NKPRCVCAPDCSNITWKGPVCGLDGKTYRNECALLKARCKEQPELEVQYQGKCKK). Residue N124 is glycosylated (N-linked (GlcNAc...) asparagine). A Follistatin-like 2 domain is found at 167 to 190 (TCRDVFCPGSSTCVVDQTNNAYCV). One can recognise a Kazal-like 2 domain in the interval 186–241 (NAYCVTCNRICPEPSSSEQYLCGNDGVTYSSACHLRKATCLLGRSIGLAYEGKCIK). Residues 244-268 (SCEDIQCGGGKKCLWDSKVGRGRCS) form the Follistatin-like 3 domain. A Kazal-like 3 domain is found at 264 to 318 (RGRCSLCDELCPDSKSDEPVCASDNATYASECAMKEAACSSGVLLEVKHSGSCNS). N-linked (GlcNAc...) asparagine glycosylation is present at N288. The interval 315–344 (SCNSISEETEEEEEEEDQDYSFPISSILEW) is disordered. Positions 321-333 (EETEEEEEEEDQD) are enriched in acidic residues.

As to quaternary structure, interacts with GDF11. Interacts with activin A/INHBA. Interacts with myostatin/MSTN.

Its subcellular location is the secreted. It localises to the nucleus. It is found in the nucleolus. In terms of biological role, multifunctional regulatory protein whose primary function is to antagonize members of the transforming growth factor beta (TGF-beta) superfamily including activin, myostatin, GDF11 or bone morphogenetic proteins (BMPs). Mechanistically, binds to these ligands in the extracellular space, blocking their type II receptor-binding site to inhibit downstream signaling. Plays an essential role in muscle fiber formation and growth both by preventing the repressive effects of myostatin and through SMAD3/AKT/mTOR signaling independently of myostatin. Also promotes neural differentiation by antagonizing the action BMP4. Acts as a specific inhibitor of the biosynthesis and secretion of pituitary follicle stimulating hormone (FSH) by sequestering activin A/INHBA. On the other hand, translocates into the nucleus where it down-regulates rRNA synthesis and ribosome biogenesis to maintain cellular energy homeostasis by binding to rDNA. The chain is Follistatin from Mus musculus (Mouse).